A 542-amino-acid chain; its full sequence is Chaperonin GroEL 1 (542 aa).

Residues 29 to 32, 86 to 90, glycine 413, 477 to 479, and aspartate 493 each bind ATP; these read TLGP, DGTTT, and NAA.

Belongs to the chaperonin (HSP60) family. As to quaternary structure, forms a cylinder of 14 subunits composed of two heptameric rings stacked back-to-back. Interacts with the co-chaperonin GroES.

It localises to the cytoplasm. The enzyme catalyses ATP + H2O + a folded polypeptide = ADP + phosphate + an unfolded polypeptide.. In terms of biological role, together with its co-chaperonin GroES, plays an essential role in assisting protein folding. The GroEL-GroES system forms a nano-cage that allows encapsulation of the non-native substrate proteins and provides a physical environment optimized to promote and accelerate protein folding. This Kineococcus radiotolerans (strain ATCC BAA-149 / DSM 14245 / SRS30216) protein is Chaperonin GroEL 1.